Reading from the N-terminus, the 451-residue chain is Chromosomal replication initiator protein DnaA (451 aa).

Residues 1–94 form a domain I, interacts with DnaA modulators region; that stretch reads MKPDLSSLWQ…KPEPKPAQPS (94 aa). The interval 87 to 106 is disordered; that stretch reads EPKPAQPSALPTHHNKEENK. The domain II stretch occupies residues 95-113; that stretch reads ALPTHHNKEENKPQTVIRS. The domain III, AAA+ region stretch occupies residues 114 to 331; sequence YLNPKHVFEN…GALNRVSANA (218 aa). ATP is bound by residues glycine 159, glycine 161, lysine 162, and threonine 163. The tract at residues 332–451 is domain IV, binds dsDNA; the sequence is EFMGAAITID…WSNLIRTLSV (120 aa).

This sequence belongs to the DnaA family. Oligomerizes as a right-handed, spiral filament on DNA at oriC.

The protein resides in the cytoplasm. Its function is as follows. Plays an essential role in the initiation and regulation of chromosomal replication. ATP-DnaA binds to the origin of replication (oriC) to initiate formation of the DNA replication initiation complex once per cell cycle. Binds the DnaA box (a 9 base pair repeat at the origin) and separates the double-stranded (ds)DNA. Forms a right-handed helical filament on oriC DNA; dsDNA binds to the exterior of the filament while single-stranded (ss)DNA is stabiized in the filament's interior. The ATP-DnaA-oriC complex binds and stabilizes one strand of the AT-rich DNA unwinding element (DUE), permitting loading of DNA polymerase. After initiation quickly degrades to an ADP-DnaA complex that is not apt for DNA replication. Binds acidic phospholipids. The protein is Chromosomal replication initiator protein DnaA of Pasteurella multocida (strain Pm70).